The following is a 375-amino-acid chain: Proton-coupled zinc antiporter SLC30A8 (375 aa).

Over 1-68 the chain is Cytoplasmic; the sequence is MKGPEKAYLV…QREQTSAKKK (68 aa). Residues H46, C47, and H48 each coordinate Zn(2+). The HCH Motif; seals regulatory zinc-binding pocket motif lies at 46–48; it reads HCH. A helical membrane pass occupies residues 69-89; the sequence is LCIASLICFVFISAEIVGGYI. The Lumenal, vesicle segment spans residues 90-98; the sequence is AGSLAVVTD. A helical membrane pass occupies residues 99-119; it reads AAHLLVDLSSFFISLGSLWLS. Zn(2+) is bound by residues H101 and D105. At 120-135 the chain is on the cytoplasmic side; the sequence is SKSSTMRLTFGWYRAE. The chain crosses the membrane as a helical span at residues 136-156; it reads ILGALMSIITIWLVTGVLVYL. The Lumenal, vesicle portion of the chain corresponds to 157-170; sequence AIERIIRPDYTIDG. The chain crosses the membrane as a helical span at residues 171–191; the sequence is TVMLITSACALGANVVLALIL. Topologically, residues 192–223 are cytoplasmic; that stretch reads HQSGHGHSHAGGKHEHMASEYKPQTNASIRAA. Residues 224–244 form a helical membrane-spanning segment; sequence FIHVIGDLFQSISVLISALII. H226 and D230 together coordinate Zn(2+). Topologically, residues 245 to 251 are lumenal, vesicle; it reads YFKPEYK. The chain crosses the membrane as a helical span at residues 252–272; the sequence is IADPICTFIFSIFVLITTVTV. Residues 273–375 lie on the Cytoplasmic side of the membrane; the sequence is LRDLLNILME…ECMFCYEPTQ (103 aa). H307, H324, H351, E358, C367, and C370 together coordinate Zn(2+).

This sequence belongs to the cation diffusion facilitator (CDF) transporter (TC 2.A.4) family. SLC30A subfamily. In terms of assembly, homodimer.

The protein localises to the cytoplasmic vesicle. It localises to the secretory vesicle membrane. Its subcellular location is the cell membrane. It catalyses the reaction Zn(2+)(in) + 2 H(+)(out) = Zn(2+)(out) + 2 H(+)(in). Functionally, proton-coupled zinc ion antiporter mediating the entry of zinc into the lumen of pancreatic beta cell secretory granules, thereby regulating insulin secretion. In Xenopus laevis (African clawed frog), this protein is Proton-coupled zinc antiporter SLC30A8 (slc30a8).